A 520-amino-acid chain; its full sequence is Peptide chain release factor 3 (520 aa).

The region spanning 8–273 (ESRKTFAIIS…AYVDHAPMPN (266 aa)) is the tr-type G domain. GTP contacts are provided by residues 17–24 (SHPDAGKT), 85–89 (DTPGH), and 139–142 (NKLD).

Belongs to the TRAFAC class translation factor GTPase superfamily. Classic translation factor GTPase family. PrfC subfamily.

The protein localises to the cytoplasm. Its function is as follows. Increases the formation of ribosomal termination complexes and stimulates activities of RF-1 and RF-2. It binds guanine nucleotides and has strong preference for UGA stop codons. It may interact directly with the ribosome. The stimulation of RF-1 and RF-2 is significantly reduced by GTP and GDP, but not by GMP. The protein is Peptide chain release factor 3 of Staphylococcus carnosus (strain TM300).